The following is a 155-amino-acid chain: Large ribosomal subunit protein eL24 (155 aa).

Over residues lysine 97–lysine 129 the composition is skewed to basic and acidic residues. The tract at residues lysine 97–arginine 155 is disordered. A compositionally biased stretch (polar residues) spans threonine 133–glutamine 142.

Belongs to the eukaryotic ribosomal protein eL24 family.

The protein is Large ribosomal subunit protein eL24 (RPL24) of Eremothecium gossypii (strain ATCC 10895 / CBS 109.51 / FGSC 9923 / NRRL Y-1056) (Yeast).